Here is a 205-residue protein sequence, read N- to C-terminus: Large ribosomal subunit protein uL4 (205 aa).

The interval 65–99 (RQKGTGGARHGSRKSPTFRHGGVYKGPTPRSHGHD) is disordered.

The protein belongs to the universal ribosomal protein uL4 family. In terms of assembly, part of the 50S ribosomal subunit.

In terms of biological role, one of the primary rRNA binding proteins, this protein initially binds near the 5'-end of the 23S rRNA. It is important during the early stages of 50S assembly. It makes multiple contacts with different domains of the 23S rRNA in the assembled 50S subunit and ribosome. Forms part of the polypeptide exit tunnel. In Ruegeria pomeroyi (strain ATCC 700808 / DSM 15171 / DSS-3) (Silicibacter pomeroyi), this protein is Large ribosomal subunit protein uL4.